The chain runs to 333 residues: Transaldolase (333 aa).

Lys135 acts as the Schiff-base intermediate with substrate in catalysis.

Belongs to the transaldolase family. Type 1 subfamily. As to quaternary structure, homodimer.

The protein resides in the cytoplasm. It catalyses the reaction D-sedoheptulose 7-phosphate + D-glyceraldehyde 3-phosphate = D-erythrose 4-phosphate + beta-D-fructose 6-phosphate. Its pathway is carbohydrate degradation; pentose phosphate pathway; D-glyceraldehyde 3-phosphate and beta-D-fructose 6-phosphate from D-ribose 5-phosphate and D-xylulose 5-phosphate (non-oxidative stage): step 2/3. Transaldolase is important for the balance of metabolites in the pentose-phosphate pathway. The polypeptide is Transaldolase (Prochlorococcus marinus (strain MIT 9301)).